Consider the following 257-residue polypeptide: Acetylglutamate kinase (257 aa).

Substrate-binding positions include 43–44 (GG), Arg-65, and Asn-157.

The protein belongs to the acetylglutamate kinase family. ArgB subfamily.

The protein resides in the cytoplasm. It catalyses the reaction N-acetyl-L-glutamate + ATP = N-acetyl-L-glutamyl 5-phosphate + ADP. Its pathway is amino-acid biosynthesis; L-arginine biosynthesis; N(2)-acetyl-L-ornithine from L-glutamate: step 2/4. Functionally, catalyzes the ATP-dependent phosphorylation of N-acetyl-L-glutamate. The polypeptide is Acetylglutamate kinase (Pasteurella multocida (strain Pm70)).